The sequence spans 530 residues: NADH-quinone oxidoreductase subunit C/D (530 aa).

An NADH dehydrogenase I subunit C region spans residues 1-144 (MQEIQFIVPA…NPLCMANEET (144 aa)). Residues 171-530 (EYVVNIGPQH…LDYVVPDIDR (360 aa)) are NADH dehydrogenase I subunit D.

This sequence in the N-terminal section; belongs to the complex I 30 kDa subunit family. In the C-terminal section; belongs to the complex I 49 kDa subunit family. NDH-1 is composed of 13 different subunits. Subunits NuoB, CD, E, F, and G constitute the peripheral sector of the complex.

The protein resides in the cell inner membrane. It catalyses the reaction a quinone + NADH + 5 H(+)(in) = a quinol + NAD(+) + 4 H(+)(out). In terms of biological role, NDH-1 shuttles electrons from NADH, via FMN and iron-sulfur (Fe-S) centers, to quinones in the respiratory chain. The immediate electron acceptor for the enzyme in this species is believed to be a menaquinone. Couples the redox reaction to proton translocation (for every two electrons transferred, four hydrogen ions are translocated across the cytoplasmic membrane), and thus conserves the redox energy in a proton gradient. The chain is NADH-quinone oxidoreductase subunit C/D from Bacteroides thetaiotaomicron (strain ATCC 29148 / DSM 2079 / JCM 5827 / CCUG 10774 / NCTC 10582 / VPI-5482 / E50).